Reading from the N-terminus, the 56-residue chain is MASKSADIRPKITLACEVCKERNYITTKNRRNHPDRLELQKFCPRCTAKTAHRETR.

The protein belongs to the bacterial ribosomal protein bL33 family.

The sequence is that of Large ribosomal subunit protein bL33 from Beutenbergia cavernae (strain ATCC BAA-8 / DSM 12333 / CCUG 43141 / JCM 11478 / NBRC 16432 / NCIMB 13614 / HKI 0122).